A 102-amino-acid polypeptide reads, in one-letter code: RNA-binding protein Hfq (102 aa).

Residues 9–68 enclose the Sm domain; the sequence is DPFLNALRRERVPVSIYLVNGIKLQGQIESFDQFVILLKNTVSQMVYKHAISTVVPSRPV. Residues 63–102 form a disordered region; it reads VPSRPVSHHSNNAGGSTSSNYHHGSSAQNTSAQQDSEENE. The span at 70-96 shows a compositional bias: polar residues; sequence HHSNNAGGSTSSNYHHGSSAQNTSAQQ.

This sequence belongs to the Hfq family. In terms of assembly, homohexamer.

In terms of biological role, RNA chaperone that binds small regulatory RNA (sRNAs) and mRNAs to facilitate mRNA translational regulation in response to envelope stress, environmental stress and changes in metabolite concentrations. Also binds with high specificity to tRNAs. In Escherichia coli O17:K52:H18 (strain UMN026 / ExPEC), this protein is RNA-binding protein Hfq.